A 161-amino-acid polypeptide reads, in one-letter code: Large ribosomal subunit protein uL16 (161 aa).

Belongs to the universal ribosomal protein uL16 family.

The protein is Large ribosomal subunit protein uL16 of Methanosphaera stadtmanae (strain ATCC 43021 / DSM 3091 / JCM 11832 / MCB-3).